The primary structure comprises 749 residues: Transcription factor RFX3 (749 aa).

A DNA-binding region (RFX-type winged-helix) is located at residues 183–258 (HLQWLLDNYE…YHYYGIRVKP (76 aa)).

Belongs to the RFX family.

The protein resides in the nucleus. In terms of biological role, transcription factor required for ciliogenesis and islet cell differentiation during endocrine pancreas development. This Xenopus tropicalis (Western clawed frog) protein is Transcription factor RFX3 (rfx3).